The primary structure comprises 416 residues: Tumor necrosis factor receptor superfamily member 16 (416 aa).

The first 19 residues, Met1 to Gly19, serve as a signal peptide directing secretion. TNFR-Cys repeat units lie at residues Lys23–Glu57, Pro58–Cys99, Arg100–Cys138, and Glu140–Cys180. Disulfide bonds link Cys24/Cys35, Cys36/Cys49, Cys39/Cys56, Cys59/Cys75, Cys78/Cys91, Cys81/Cys99, Cys101/Cys114, Cys117/Cys130, Cys120/Cys138, Cys141/Cys156, Cys159/Cys172, and Cys162/Cys180. Residues Tyr29–Asn239 lie on the Extracellular side of the membrane. A glycan (N-linked (GlcNAc...) asparagine) is linked at Asn52. A helical transmembrane segment spans residues Leu240–Phe261. Residues Lys262–Val416 are Cytoplasmic-facing. Polar residues-rich tracts occupy residues Asn270–Ser284 and Ser294–Gly315. Residues Asn270–Leu328 form a disordered region. Residues Gln333–Ser410 form the Death domain.

In terms of assembly, homodimer; disulfide-linked. Heterodimer with SORCS2. The extracellular domains of the heterodimer bind NGF. In terms of processing, N- and O-glycosylated. Phosphorylated on serine residues. In terms of tissue distribution, detected in embryonic dorsal root ganglion and retina.

It localises to the cell membrane. The protein resides in the perikaryon. Its subcellular location is the cell projection. It is found in the growth cone. The protein localises to the dendritic spine. Its function is as follows. Low affinity receptor which can bind to NGF, BDNF, NTF3, and NTF4. Forms a heterodimeric receptor with SORCS2 that binds the precursor forms of NGF, BDNF and NTF3 with high affinity, and has much lower affinity for mature NGF and BDNF. Plays an important role in differentiation and survival of specific neuronal populations during development. Can mediate cell survival as well as cell death of neural cells. Plays a role in the inactivation of RHOA. Necessary for the circadian oscillation of clock genes in the suprachiasmatic nucleus (SCmgetaN) of the brain and in liver and of the genes involved in glucose and lipid metabolism in the liver. This chain is Tumor necrosis factor receptor superfamily member 16 (NGFR), found in Gallus gallus (Chicken).